The sequence spans 332 residues: Ribosomal RNA-processing protein 8 (332 aa).

A disordered region spans residues 1-109 (MGKKRINEVS…EVEKKNEEGD (109 aa)). Composition is skewed to basic residues over residues 38–53 (KKKK…KLAA) and 82–94 (KKKK…KKKY). Over residues 95–109 (KPEAAEVEKKNEEGD) the composition is skewed to basic and acidic residues. S-adenosyl-L-methionine contacts are provided by histidine 158, glycine 193, aspartate 213, aspartate 225, methionine 226, and cysteine 242.

Belongs to the methyltransferase superfamily. RRP8 family.

Its subcellular location is the nucleus. The protein resides in the nucleolus. In terms of biological role, probable methyltransferase required to silence rDNA. The sequence is that of Ribosomal RNA-processing protein 8 (rrp-8) from Caenorhabditis briggsae.